Here is a 326-residue protein sequence, read N- to C-terminus: Biotin synthase (326 aa).

One can recognise a Radical SAM core domain in the interval 50–279; it reads FNGEKVDVEQ…ESVIKISGGR (230 aa). Residues C68, C72, and C75 each contribute to the [4Fe-4S] cluster site. C112, C145, C204, and K274 together coordinate [2Fe-2S] cluster.

Belongs to the radical SAM superfamily. Biotin synthase family. Homodimer. [4Fe-4S] cluster is required as a cofactor. [2Fe-2S] cluster serves as cofactor.

It carries out the reaction (4R,5S)-dethiobiotin + (sulfur carrier)-SH + 2 reduced [2Fe-2S]-[ferredoxin] + 2 S-adenosyl-L-methionine = (sulfur carrier)-H + biotin + 2 5'-deoxyadenosine + 2 L-methionine + 2 oxidized [2Fe-2S]-[ferredoxin]. The protein operates within cofactor biosynthesis; biotin biosynthesis; biotin from 7,8-diaminononanoate: step 2/2. Catalyzes the conversion of dethiobiotin (DTB) to biotin by the insertion of a sulfur atom into dethiobiotin via a radical-based mechanism. The protein is Biotin synthase of Nitrosopumilus maritimus (strain SCM1).